The sequence spans 95 residues: CRISPR-associated endoribonuclease Cas2 (95 aa).

Residue Asp9 participates in Mg(2+) binding.

Belongs to the CRISPR-associated endoribonuclease Cas2 protein family. Homodimer, forms a heterotetramer with a Cas1 homodimer. Mg(2+) is required as a cofactor.

Functionally, CRISPR (clustered regularly interspaced short palindromic repeat), is an adaptive immune system that provides protection against mobile genetic elements (viruses, transposable elements and conjugative plasmids). CRISPR clusters contain sequences complementary to antecedent mobile elements and target invading nucleic acids. CRISPR clusters are transcribed and processed into CRISPR RNA (crRNA). Functions as a ssRNA-specific endoribonuclease. Involved in the integration of spacer DNA into the CRISPR cassette. The chain is CRISPR-associated endoribonuclease Cas2 from Methylorubrum extorquens (strain CM4 / NCIMB 13688) (Methylobacterium extorquens).